The chain runs to 710 residues: multidrug resistance regulator 2 (710 aa).

Positions 11–37 (CDACRSRKIKCNRQTPCASCHKSKRDC) form a DNA-binding region, zn(2)-C6 fungal-type. 2 helical membrane-spanning segments follow: residues 475-495 (DLVI…LYLF) and 525-545 (LFLA…TNFL).

It is found in the nucleus. The protein resides in the membrane. Its function is as follows. Transcription factor that controls the expression of CDR1, the major multidrug efflux pump. Required for yeast cell adherence to silicone substrate and plays a role in virulence. This chain is multidrug resistance regulator 2, found in Candida albicans (strain SC5314 / ATCC MYA-2876) (Yeast).